The primary structure comprises 408 residues: Serine/threonine transporter SstT (408 aa).

9 helical membrane-spanning segments follow: residues 11–31, 43–63, 82–102, 141–161, 192–212, 216–236, 290–310, 316–336, and 363–383; these read LANG…VALA, FLGS…VFIL, IVVL…ILSM, ALMT…GLAL, IGIF…AIAG, LLAV…PLIV, IPLG…VLTL, LGIQ…AISA, and VAMQ…AAET.

This sequence belongs to the dicarboxylate/amino acid:cation symporter (DAACS) (TC 2.A.23) family.

It localises to the cell inner membrane. The catalysed reaction is L-serine(in) + Na(+)(in) = L-serine(out) + Na(+)(out). The enzyme catalyses L-threonine(in) + Na(+)(in) = L-threonine(out) + Na(+)(out). In terms of biological role, involved in the import of serine and threonine into the cell, with the concomitant import of sodium (symport system). The chain is Serine/threonine transporter SstT from Shewanella oneidensis (strain ATCC 700550 / JCM 31522 / CIP 106686 / LMG 19005 / NCIMB 14063 / MR-1).